Reading from the N-terminus, the 539-residue chain is CTP synthase (539 aa).

The amidoligase domain stretch occupies residues 1 to 267; the sequence is MTKYIFVTGG…DQKVVDFLHI (267 aa). Residue S13 coordinates CTP. S13 is a UTP binding site. 14–19 contributes to the ATP binding site; sequence SLGKGI. Y54 is an L-glutamine binding site. Position 71 (D71) interacts with ATP. The Mg(2+) site is built by D71 and E141. CTP-binding positions include 148–150, 188–193, and K224; these read DME and KSKPTQ. Residues 188 to 193 and K224 contribute to the UTP site; that span reads KSKPTQ. The 244-residue stretch at 294-537 folds into the Glutamine amidotransferase type-1 domain; the sequence is KITLVGKYVE…IGAASGLQVD (244 aa). An L-glutamine-binding site is contributed by G356. The Nucleophile; for glutamine hydrolysis role is filled by C383. L-glutamine is bound by residues 384–387, E407, and R465; that span reads LGMQ. Catalysis depends on residues H510 and E512.

This sequence belongs to the CTP synthase family. In terms of assembly, homotetramer.

It carries out the reaction UTP + L-glutamine + ATP + H2O = CTP + L-glutamate + ADP + phosphate + 2 H(+). It catalyses the reaction L-glutamine + H2O = L-glutamate + NH4(+). The catalysed reaction is UTP + NH4(+) + ATP = CTP + ADP + phosphate + 2 H(+). The protein operates within pyrimidine metabolism; CTP biosynthesis via de novo pathway; CTP from UDP: step 2/2. Its activity is regulated as follows. Allosterically activated by GTP, when glutamine is the substrate; GTP has no effect on the reaction when ammonia is the substrate. The allosteric effector GTP functions by stabilizing the protein conformation that binds the tetrahedral intermediate(s) formed during glutamine hydrolysis. Inhibited by the product CTP, via allosteric rather than competitive inhibition. Catalyzes the ATP-dependent amination of UTP to CTP with either L-glutamine or ammonia as the source of nitrogen. Regulates intracellular CTP levels through interactions with the four ribonucleotide triphosphates. This chain is CTP synthase, found in Lactobacillus delbrueckii subsp. bulgaricus (strain ATCC BAA-365 / Lb-18).